The primary structure comprises 421 residues: E3 ubiquitin-protein ligase RMD5 (421 aa).

Residues 176–236 form the CTLH domain; that stretch reads EFIEMGQIVH…QIVKHGNPVE (61 aa). An RING-Gid-type zinc finger spans residues 361-404; sequence CPVLKEETTTENPPYSLACHHIISKKALDRLSKNGTITFKCPYC.

It belongs to the RMD5/GID2 family. In terms of assembly, identified in the GID/CTLH complex. In the absence of stress, the complex exists as an inactive anticipatory complex (GID(Ant)), composed of VID30/GID1, the E3 ubiquitin-ligase RMD5/GID2, VID28/GID5, GID8, and the RING-like subunit FYV10/GID9, awaiting a substrate receptor to form the active E3 ligase complex. When cells are shifted to glucose-containing medium, the substrate receptor VID24/GID4 is induced and becomes part of the complex, named GID(SR4). Additionally, GID7 transforms the GID(SR4) E3 ligase core into a higher-order supramolecular assembly (Chelator-GID(SR4)) specifically tailored for FBP1 ubiquitination. Under osmotic or heat stress, the substrate receptor GID10 is induced and becomes part of the complex, named GID(SR10). Within the GID complex, interacts directly with GID8, FYV10/GID9 and VID28/GID5.

The protein localises to the cytoplasm. The catalysed reaction is S-ubiquitinyl-[E2 ubiquitin-conjugating enzyme]-L-cysteine + [acceptor protein]-L-lysine = [E2 ubiquitin-conjugating enzyme]-L-cysteine + N(6)-ubiquitinyl-[acceptor protein]-L-lysine.. It participates in protein modification; protein ubiquitination. In terms of biological role, E3 ubiquitin-protein ligase component of the GID E3 ligase complex recruiting N termini and catalyzing ubiquitination of proteins targeted for degradation. GID E3 is regulated through assembly with interchangeable N-degron-binding substrate receptors induced by distinct environmental perturbations. Required for the adaptation to the presence of glucose in the growth medium; mediates in association with the substrate receptor VID24/GID4 the degradation of enzymes involved in gluconeogenesis when cells are shifted to glucose-containing medium. Required for proteasome-dependent catabolite degradation of fructose-1,6-bisphosphatase (FBP1), malate dehydrogenase (MDH2), and other gluconeogenic enzymes. The sequence is that of E3 ubiquitin-protein ligase RMD5 from Saccharomyces cerevisiae (strain ATCC 204508 / S288c) (Baker's yeast).